Reading from the N-terminus, the 340-residue chain is Protein-arginine kinase (340 aa).

Residues 21–242 enclose the Phosphagen kinase C-terminal domain; it reads VVLSSRIRLA…EQIIMQERVA (222 aa). ATP-binding positions include 24 to 28, H79, R113, 164 to 168, and 195 to 200; these read SSRIR, RASVM, and RGIYGE.

This sequence belongs to the ATP:guanido phosphotransferase family.

The enzyme catalyses L-arginyl-[protein] + ATP = N(omega)-phospho-L-arginyl-[protein] + ADP + H(+). In terms of biological role, catalyzes the specific phosphorylation of arginine residues in proteins. This chain is Protein-arginine kinase, found in Listeria monocytogenes serotype 4b (strain F2365).